The chain runs to 347 residues: Histone deacetylase 11 (347 aa).

A histone deacetylase region spans residues 14–318 (KRWPIVYSPR…ARIIADSILN (305 aa)). H143 is a catalytic residue.

This sequence belongs to the histone deacetylase family. In terms of assembly, interacts with HDAC6.

Its subcellular location is the nucleus. It carries out the reaction N(6)-acetyl-L-lysyl-[histone] + H2O = L-lysyl-[histone] + acetate. In terms of biological role, responsible for the deacetylation of lysine residues on the N-terminal part of the core histones (H2A, H2B, H3 and H4). Histone deacetylation gives a tag for epigenetic repression and plays an important role in transcriptional regulation, cell cycle progression and developmental events. Histone deacetylases act via the formation of large multiprotein complexes. This chain is Histone deacetylase 11 (Hdac11), found in Mus musculus (Mouse).